We begin with the raw amino-acid sequence, 875 residues long: DNA mismatch repair protein MutS (875 aa).

Gly-626 to Ser-633 provides a ligand contact to ATP. The interval Arg-830–Pro-855 is disordered. Residues Pro-845–Pro-855 show a composition bias toward basic and acidic residues.

It belongs to the DNA mismatch repair MutS family.

Its function is as follows. This protein is involved in the repair of mismatches in DNA. It is possible that it carries out the mismatch recognition step. This protein has a weak ATPase activity. This is DNA mismatch repair protein MutS from Cereibacter sphaeroides (strain ATCC 17023 / DSM 158 / JCM 6121 / CCUG 31486 / LMG 2827 / NBRC 12203 / NCIMB 8253 / ATH 2.4.1.) (Rhodobacter sphaeroides).